A 73-amino-acid polypeptide reads, in one-letter code: Photosystem I reaction center subunit IV (73 aa).

The protein belongs to the PsaE family.

The protein localises to the cellular thylakoid membrane. In terms of biological role, stabilizes the interaction between PsaC and the PSI core, assists the docking of the ferredoxin to PSI and interacts with ferredoxin-NADP oxidoreductase. The polypeptide is Photosystem I reaction center subunit IV (Synechococcus sp. (strain JA-3-3Ab) (Cyanobacteria bacterium Yellowstone A-Prime)).